A 741-amino-acid polypeptide reads, in one-letter code: Catalase-peroxidase (741 aa).

Residues 1–21 form the signal peptide; that stretch reads MRNFRRFTIALLVLFLGPIGA. Residues 109-231 constitute a cross-link (tryptophyl-tyrosyl-methioninium (Trp-Tyr) (with M-257)); the sequence is WHSAGTYRIS…LAAVQMGLIY (123 aa). His-110 (proton acceptor) is an active-site residue. Positions 231–257 form a cross-link, tryptophyl-tyrosyl-methioninium (Tyr-Met) (with W-109); the sequence is YVNPEGPNGNPDPLAAAKDIRETFGRM. His-272 contacts heme b.

The protein belongs to the peroxidase family. Peroxidase/catalase subfamily. Homodimer or homotetramer. Heme b serves as cofactor. Formation of the three residue Trp-Tyr-Met cross-link is important for the catalase, but not the peroxidase activity of the enzyme.

It catalyses the reaction H2O2 + AH2 = A + 2 H2O. The enzyme catalyses 2 H2O2 = O2 + 2 H2O. Its function is as follows. Bifunctional enzyme with both catalase and broad-spectrum peroxidase activity. This Leptospira biflexa serovar Patoc (strain Patoc 1 / Ames) protein is Catalase-peroxidase.